Consider the following 125-residue polypeptide: Small ribosomal subunit protein uS12 (125 aa).

Asp89 carries the 3-methylthioaspartic acid modification. The disordered stretch occupies residues 100–125; the sequence is GSLDTQGVKDRKQSRSKYGAKRPKAA. Over residues 113-125 the composition is skewed to basic residues; sequence SRSKYGAKRPKAA.

Belongs to the universal ribosomal protein uS12 family. As to quaternary structure, part of the 30S ribosomal subunit. Contacts proteins S8 and S17. May interact with IF1 in the 30S initiation complex.

Its function is as follows. With S4 and S5 plays an important role in translational accuracy. In terms of biological role, interacts with and stabilizes bases of the 16S rRNA that are involved in tRNA selection in the A site and with the mRNA backbone. Located at the interface of the 30S and 50S subunits, it traverses the body of the 30S subunit contacting proteins on the other side and probably holding the rRNA structure together. The combined cluster of proteins S8, S12 and S17 appears to hold together the shoulder and platform of the 30S subunit. In Dechloromonas aromatica (strain RCB), this protein is Small ribosomal subunit protein uS12.